The chain runs to 102 residues: MHPITPVHYLALSAALLLIGTVGVLTRRNIVIILMSIELILNAVNINLIAFSHALQNINGQIFAIFVITDAVAEAAVGLGILIALFRNKETVQADEIDLLKW.

3 helical membrane-spanning segments follow: residues isoleucine 4–valine 24, isoleucine 30–alanine 50, and isoleucine 62–leucine 82.

It belongs to the complex I subunit 4L family. In terms of assembly, NDH-1 is composed of 14 different subunits. Subunits NuoA, H, J, K, L, M, N constitute the membrane sector of the complex.

It is found in the cell inner membrane. It catalyses the reaction a quinone + NADH + 5 H(+)(in) = a quinol + NAD(+) + 4 H(+)(out). NDH-1 shuttles electrons from NADH, via FMN and iron-sulfur (Fe-S) centers, to quinones in the respiratory chain. The immediate electron acceptor for the enzyme in this species is believed to be ubiquinone. Couples the redox reaction to proton translocation (for every two electrons transferred, four hydrogen ions are translocated across the cytoplasmic membrane), and thus conserves the redox energy in a proton gradient. This is NADH-quinone oxidoreductase subunit K 2 from Solibacter usitatus (strain Ellin6076).